Here is a 489-residue protein sequence, read N- to C-terminus: Cytochrome P450 monooxygenase trt6 (489 aa).

The chain crosses the membrane as a helical span at residues 10 to 30 (SLWSFGLWILVILSPVLFFAS). Asn364 and Asn407 each carry an N-linked (GlcNAc...) asparagine glycan. Position 430 (Cys430) interacts with heme.

It belongs to the cytochrome P450 family. Heme serves as cofactor.

It is found in the membrane. It participates in secondary metabolite biosynthesis; terpenoid biosynthesis. In terms of biological role, cytochrome P450 monooxygenase; part of the gene cluster that mediates the biosynthesis of terretonin, a fungal meroterpenoid that acts as a mycotoxin. The first step of the pathway is the synthesis of 3,5-dimethylorsellinic acid (DMOA) by the polyketide synthase trt4. DMOA is then prenylated into farnesyl-DMOA by the polyprenyl transferase trt2. Methylation by the methyltransferase trt5 then leads to farnesyl-DMOA methyl ester which is further subject to epoxidation by the FAD-dependent monooxygenase trt8 to yield epoxyfarnesyl-DMOA methyl ester. Cyclization of epoxyfarnesyl-DMOA methyl ester by the terpene cyclase trt1 leads to a tetracycle intermediate which is in turn converted to preterretonin. Dehydrogenase trt9 comes next to transform preterretonin to preterrenoid. The FAD-dependent monooxygenase trt3 is then required for the C-hydroxylation at C16 of preterrenoid to yield terrenoid. The cytochrome P450 trt6 catalyzes three successive oxidations to transform terrenoid into an unstable intermediate, which then undergoes the D-ring expansion and unusual rearrangement of the methoxy group to afford the core skeleton of terretonin. Trt14 catalyzes the D-ring expansion of terretonin involving intramolecular methoxy rearrangement as well as the hydrolysis of the expanded D-ring and the methyl ester moiety. Finally, the nonheme iron-dependent dioxygenase trt7 accomplishes the last two oxidation reactions steps to complete the biosynthesis of terretonin. Terretonin C is produced via spontaneous decarboxylation of the terretonin precursor. Another shunt product of the terretonin biosynthesis is dihydrofarnesyl-DMOA, derived from epoxyfarnesyl-DMOA through hydrolysis of the epoxide. This is Cytochrome P450 monooxygenase trt6 from Aspergillus terreus (strain NIH 2624 / FGSC A1156).